Consider the following 335-residue polypeptide: Cathepsin B (335 aa).

The N-terminal stretch at 1–17 is a signal peptide; the sequence is MWRLLATLSCLLVLTSA. Positions 18–79 are cleaved as a propeptide — activation peptide; that stretch reads RSSLYFPPLS…QRDAFAADVV (62 aa). Cystine bridges form between Cys-93-Cys-122, Cys-105-Cys-150, Cys-141-Cys-207, Cys-142-Cys-146, Cys-179-Cys-211, and Cys-187-Cys-198. Residue Cys-108 is part of the active site. N-linked (GlcNAc...) asparagine glycosylation occurs at Asn-192. Position 220 is an N6-acetyllysine (Lys-220). Cys-227 and Cys-331 are disulfide-bonded. Residues His-278 and Asn-298 contribute to the active site. Positions 333–335 are excised as a propeptide; sequence HQY.

It belongs to the peptidase C1 family. Dimer of a heavy chain and a light chain cross-linked by a disulfide bond. Interacts with SRPX2. Directly interacts with SHKBP1. Expressed in myoblasts, the myotube, fibroblasts and fetal muscle (at protein level). Expressed in the spleen (at protein level).

It is found in the lysosome. It localises to the melanosome. The protein localises to the secreted. Its subcellular location is the extracellular space. The protein resides in the apical cell membrane. It carries out the reaction Hydrolysis of proteins with broad specificity for peptide bonds. Preferentially cleaves -Arg-Arg-|-Xaa bonds in small molecule substrates (thus differing from cathepsin L). In addition to being an endopeptidase, shows peptidyl-dipeptidase activity, liberating C-terminal dipeptides.. Its function is as follows. Thiol protease which is believed to participate in intracellular degradation and turnover of proteins. Cleaves matrix extracellular phosphoglycoprotein MEPE. Involved in the solubilization of cross-linked TG/thyroglobulin in the thyroid follicle lumen. Has also been implicated in tumor invasion and metastasis. In Bos taurus (Bovine), this protein is Cathepsin B (CTSB).